Consider the following 412-residue polypeptide: CHRNA7-FAM7A fusion protein (412 aa).

Helical transmembrane passes span 144-164 (GLNLLIPCVLISALALLVFLL), 172-192 (ISLGITVLLSLTVFMLLVAEI), 205-225 (QYFASTMIIVGLSVVVTVIVL), 240-254 (WTRVILLNWCAWFLR), and 380-400 (LCLMAFSVFTIICTIGILMSA).

It belongs to the ligand-gated ion channel (TC 1.A.9) family. As to expression, expressed in hippocampus.

The protein localises to the membrane. This is CHRNA7-FAM7A fusion protein (CHRFAM7A) from Homo sapiens (Human).